Here is a 192-residue protein sequence, read N- to C-terminus: UPF0312 protein ECA1782 (192 aa).

Residues 1-23 (MLKKTLLSLTAVSMLASAGSALA) form the signal peptide.

The protein belongs to the UPF0312 family. Type 1 subfamily.

It localises to the periplasm. The sequence is that of UPF0312 protein ECA1782 from Pectobacterium atrosepticum (strain SCRI 1043 / ATCC BAA-672) (Erwinia carotovora subsp. atroseptica).